We begin with the raw amino-acid sequence, 233 residues long: Homeobox protein Hox-D4a (233 aa).

The Antp-type hexapeptide motif lies at 124-129; it reads VYPWMK. Positions 145-204 form a DNA-binding region, homeobox; the sequence is PKRSRTAYTRQQVLELEKEFHFNRYLTRRRRIEIAHTLCLSERQIKIWFQNRRMKWTKDH. Residues 203–233 are disordered; the sequence is DHKLPNTKGRSAPASSHLQSIHKDQTDITSL. Positions 223–233 are enriched in basic and acidic residues; sequence IHKDQTDITSL.

The protein belongs to the Antp homeobox family. Deformed subfamily.

Its subcellular location is the nucleus. Its function is as follows. Sequence-specific transcription factor which is part of a developmental regulatory system that provides cells with specific positional identities on the anterior-posterior axis. The sequence is that of Homeobox protein Hox-D4a (hoxd4a) from Takifugu rubripes (Japanese pufferfish).